We begin with the raw amino-acid sequence, 121 residues long: Basic phospholipase A2 homolog piratoxin-1 (121 aa).

Disulfide bonds link C26–C115, C28–C44, C43–C95, C49–C121, C50–C88, C57–C81, and C75–C86. Residues 105 to 117 are important for membrane-damaging activities in eukaryotes and bacteria; heparin-binding; the sequence is KLYRYHLKPFCKK.

The protein belongs to the phospholipase A2 family. Group II subfamily. K49 sub-subfamily. In terms of assembly, homodimer; non-covalently linked. As to expression, expressed by the venom gland.

Its subcellular location is the secreted. Its activity is regulated as follows. Rosmarinic acid inhibits the myotoxic activity. Bromophenacyl bromide (BPB) inhibits the myotoxic activity through a covalent binding. Caffeic acid and aristolochic acid, two plant compounds used in folk medicine used to treat envenomation, inhibit the myotoxic activity. Functionally, snake venom phospholipase A2 (PLA2) homolog that lacks enzymatic activity. Is myotoxic and displays edema-inducing activities. Induces neuromuscular blockage. A model of myotoxic mechanism has been proposed: an apo Lys49-PLA2 is activated by the entrance of a hydrophobic molecule (e.g. fatty acid) at the hydrophobic channel of the protein leading to a reorientation of a monomer. This reorientation causes a transition between 'inactive' to 'active' states, causing alignment of C-terminal and membrane-docking sites (MDoS) side-by-side and putting the membrane-disruption sites (MDiS) in the same plane, exposed to solvent and in a symmetric position for both monomers. The MDoS region stabilizes the toxin on membrane by the interaction of charged residues with phospholipid head groups. Subsequently, the MDiS region destabilizes the membrane with penetration of hydrophobic residues. This insertion causes a disorganization of the membrane, allowing an uncontrolled influx of ions (i.e. calcium and sodium), and eventually triggering irreversible intracellular alterations and cell death. The polypeptide is Basic phospholipase A2 homolog piratoxin-1 (Bothrops pirajai (Piraja's lancehead)).